Consider the following 24-residue polypeptide: Ascaphin-2 (24 aa).

As to expression, expressed by the skin glands.

It is found in the secreted. Its function is as follows. Antimicrobial peptide that shows higher potency against Gram-negative bacteria than against Gram-positive bacteria. Has a very week hemolytic activity. This chain is Ascaphin-2, found in Ascaphus truei (Coastal tailed frog).